We begin with the raw amino-acid sequence, 251 residues long: Ditrans,polycis-undecaprenyl-diphosphate synthase ((2E,6E)-farnesyl-diphosphate specific) (251 aa).

The active site involves aspartate 20. Residue aspartate 20 participates in Mg(2+) binding. Residues 21 to 24 (GNGR), tryptophan 25, arginine 33, histidine 37, and 65 to 67 (SSE) each bind substrate. The Proton acceptor role is filled by asparagine 68. Residues tryptophan 69, arginine 71, arginine 188, and 194–196 (RIS) each bind substrate. Glutamate 207 contributes to the Mg(2+) binding site.

It belongs to the UPP synthase family. Homodimer. It depends on Mg(2+) as a cofactor.

The catalysed reaction is 8 isopentenyl diphosphate + (2E,6E)-farnesyl diphosphate = di-trans,octa-cis-undecaprenyl diphosphate + 8 diphosphate. Catalyzes the sequential condensation of isopentenyl diphosphate (IPP) with (2E,6E)-farnesyl diphosphate (E,E-FPP) to yield (2Z,6Z,10Z,14Z,18Z,22Z,26Z,30Z,34E,38E)-undecaprenyl diphosphate (di-trans,octa-cis-UPP). UPP is the precursor of glycosyl carrier lipid in the biosynthesis of bacterial cell wall polysaccharide components such as peptidoglycan and lipopolysaccharide. The polypeptide is Ditrans,polycis-undecaprenyl-diphosphate synthase ((2E,6E)-farnesyl-diphosphate specific) (Vibrio parahaemolyticus serotype O3:K6 (strain RIMD 2210633)).